The sequence spans 379 residues: Gonadotropin-releasing hormone II receptor (379 aa).

Over 1-40 (MSAGNGTPWGSAVGEEAWAGSGVAVEGSELPTFSTAAKVR) the chain is Extracellular. The helical transmembrane segment at 41–60 (VGVTIVLFVSSAGGNLAVLW) threads the bilayer. Over 61-76 (SVTRPQPSQLRPSPVR) the chain is Cytoplasmic. The chain crosses the membrane as a helical span at residues 77–96 (TLFAHLAAADLLVTFVVMPL). Topologically, residues 97-114 (DATWNITVQWLAGDIACR) are extracellular. Asn-101 carries N-linked (GlcNAc...) asparagine glycosylation. A disulfide bond links Cys-113 and Cys-188. Residues 115 to 136 (TLMFLKLMAMYSAAFLPVVIGL) form a helical membrane-spanning segment. The Cytoplasmic portion of the chain corresponds to 137 to 160 (DRQAAVLNPLGSRSGVRKLLGAAW). The chain crosses the membrane as a helical span at residues 161-178 (GLSFLLALPQLFLFHTVH). Over 179-204 (RAGPVPFTQCVTKGSFKARWQETTYN) the chain is Extracellular. The chain crosses the membrane as a helical span at residues 205 to 224 (LFTFCCLFLLPLIAMAICYS). Residues 225-278 (RIVLSVSSPQTRKGSHAPAGEFALRRSFDNRPRVCLRALRLALLILLTFILCWT) lie on the Cytoplasmic side of the membrane. The chain crosses the membrane as a helical span at residues 279 to 297 (PYYLLGLWYWFSPTMLTEV). The Extracellular portion of the chain corresponds to 298 to 303 (PPSLSH). Residues 304-323 (ILFLFGLLNAPLDPLLYGAF) form a helical membrane-spanning segment. Residues 324–379 (TFGCRRGHQELSIDSSKEGSGRMLQQEIHALRQQEVQKTVTSRSAGETKGISITSI) are Cytoplasmic-facing.

The protein belongs to the G-protein coupled receptor 1 family. Phosphorylated on the C-terminal cytoplasmic tail.

The protein localises to the cell membrane. Functionally, receptor for gonadotropin releasing hormone II (GnRH II). This receptor mediates its action by association with G proteins that activate a phosphatidylinositol-calcium second messenger system. This Chlorocebus aethiops (Green monkey) protein is Gonadotropin-releasing hormone II receptor (GNRHR2).